A 630-amino-acid chain; its full sequence is Cytochrome B pre-mRNA-processing protein 2 (630 aa).

It localises to the mitochondrion. In terms of biological role, appears to be specifically required for the splicing of the terminal intron (bI5) of the cytochrome b pre-mRNA. Can also stimulates the splicing of the omega intron of the precursor of large ribosomal RNA. This is Cytochrome B pre-mRNA-processing protein 2 (CBP2) from Saccharomyces cerevisiae (strain ATCC 204508 / S288c) (Baker's yeast).